The chain runs to 272 residues: tRNA pseudouridine synthase A (272 aa).

Residue aspartate 51 is the Nucleophile of the active site. A substrate-binding site is contributed by tyrosine 109.

This sequence belongs to the tRNA pseudouridine synthase TruA family. As to quaternary structure, homodimer.

It catalyses the reaction uridine(38/39/40) in tRNA = pseudouridine(38/39/40) in tRNA. Functionally, formation of pseudouridine at positions 38, 39 and 40 in the anticodon stem and loop of transfer RNAs. The protein is tRNA pseudouridine synthase A of Verminephrobacter eiseniae (strain EF01-2).